Here is a 432-residue protein sequence, read N- to C-terminus: Serine--tRNA ligase (432 aa).

236 to 238 contributes to the L-serine binding site; it reads TSE. 267–269 contributes to the ATP binding site; the sequence is RSE. An L-serine-binding site is contributed by Glu290. 354-357 provides a ligand contact to ATP; the sequence is EISS. Ser390 contributes to the L-serine binding site.

Belongs to the class-II aminoacyl-tRNA synthetase family. Type-1 seryl-tRNA synthetase subfamily. Homodimer. The tRNA molecule binds across the dimer.

The protein resides in the cytoplasm. The catalysed reaction is tRNA(Ser) + L-serine + ATP = L-seryl-tRNA(Ser) + AMP + diphosphate + H(+). The enzyme catalyses tRNA(Sec) + L-serine + ATP = L-seryl-tRNA(Sec) + AMP + diphosphate + H(+). The protein operates within aminoacyl-tRNA biosynthesis; selenocysteinyl-tRNA(Sec) biosynthesis; L-seryl-tRNA(Sec) from L-serine and tRNA(Sec): step 1/1. Catalyzes the attachment of serine to tRNA(Ser). Is also able to aminoacylate tRNA(Sec) with serine, to form the misacylated tRNA L-seryl-tRNA(Sec), which will be further converted into selenocysteinyl-tRNA(Sec). The protein is Serine--tRNA ligase of Pseudoalteromonas atlantica (strain T6c / ATCC BAA-1087).